The following is a 524-amino-acid chain: Nif-specific regulatory protein (524 aa).

The tract at residues 1–182 is a domain; the sequence is MIHKSDSDTT…AQTIRLMILP (182 aa). The region spanning 35 to 176 is the GAF domain; the sequence is EASKTLQEVL…TVANLIAQTI (142 aa). The Sigma-54 factor interaction domain maps to 212–481; it reads MVGKSPAMRQ…DGWLDNSLDE (270 aa). Residues 240–247 and 303–312 contribute to the ATP site; these read GESGTGKE and ADGGTLFLDE. Positions 482 to 524 are C-terminal DNA-binding domain; that stretch reads RQRLIAALEKAGWVQAKAARLLGMTPRQVAYRIQIMDITMPRL. The H-T-H motif DNA-binding region spans 496–515; sequence QAKAARLLGMTPRQVAYRIQ.

In terms of assembly, interacts with sigma-54.

Required for activation of most nif operons, which are directly involved in nitrogen fixation. The protein is Nif-specific regulatory protein (nifA) of Klebsiella pneumoniae.